The chain runs to 125 residues: Large ribosomal subunit protein bL12 (125 aa).

The protein belongs to the bacterial ribosomal protein bL12 family. As to quaternary structure, homodimer. Part of the ribosomal stalk of the 50S ribosomal subunit. Forms a multimeric L10(L12)X complex, where L10 forms an elongated spine to which 2 to 4 L12 dimers bind in a sequential fashion. Binds GTP-bound translation factors.

Functionally, forms part of the ribosomal stalk which helps the ribosome interact with GTP-bound translation factors. Is thus essential for accurate translation. The polypeptide is Large ribosomal subunit protein bL12 (Campylobacter concisus (strain 13826)).